A 207-amino-acid chain; its full sequence is Imidazoleglycerol-phosphate dehydratase (207 aa).

Belongs to the imidazoleglycerol-phosphate dehydratase family.

The protein localises to the cytoplasm. The catalysed reaction is D-erythro-1-(imidazol-4-yl)glycerol 3-phosphate = 3-(imidazol-4-yl)-2-oxopropyl phosphate + H2O. The protein operates within amino-acid biosynthesis; L-histidine biosynthesis; L-histidine from 5-phospho-alpha-D-ribose 1-diphosphate: step 6/9. This Mycobacterium avium (strain 104) protein is Imidazoleglycerol-phosphate dehydratase.